The chain runs to 414 residues: Esterase FrsA (414 aa).

Belongs to the FrsA family.

The enzyme catalyses a carboxylic ester + H2O = an alcohol + a carboxylate + H(+). In terms of biological role, catalyzes the hydrolysis of esters. The chain is Esterase FrsA from Shigella dysenteriae serotype 1 (strain Sd197).